The sequence spans 119 residues: Holo-[acyl-carrier-protein] synthase (119 aa).

Residues Asp-2 and Glu-51 each coordinate Mg(2+).

It belongs to the P-Pant transferase superfamily. AcpS family. Mg(2+) serves as cofactor.

The protein resides in the cytoplasm. It catalyses the reaction apo-[ACP] + CoA = holo-[ACP] + adenosine 3',5'-bisphosphate + H(+). Its function is as follows. Transfers the 4'-phosphopantetheine moiety from coenzyme A to a Ser of acyl-carrier-protein. This Chlorobium luteolum (strain DSM 273 / BCRC 81028 / 2530) (Pelodictyon luteolum) protein is Holo-[acyl-carrier-protein] synthase.